The sequence spans 358 residues: MVNTLEKPGFDEIRPGVKTPAKETILTPRFYTTDFDEMAKMDISPNEDELRAILEEFRVDYNRHHFVRNESFNKSWDHIDGEKRQLFVEFLERSCTAEFSGFLLYKELGRRLKNKNPLLAECFNLMSRDEARHAGFLNKAMSDFNLSLDLGFLTKSRKYTFFKPKFIFYATYLSEKIGYWRYITIYRHLEKNPNDCIYPIFEFFENWCQDENRHGDFFDAIMRAQPHTLNDWKAKLWCRFFLLSVFATMYLNDTQRADFYACLGLEARSYDKEVIEKTNETAGRVFPIILDVNNPEFYNRLETCVSNNEQLRAIDASGAPGVIKALRKLPIFASNGWQFIKLYLMKPIAVDQLAGAVR.

Belongs to the AcsF family. Fe cation is required as a cofactor.

The enzyme catalyses Mg-protoporphyrin IX 13-monomethyl ester + 3 NADPH + 3 O2 + 2 H(+) = 3,8-divinyl protochlorophyllide a + 3 NADP(+) + 5 H2O. It functions in the pathway porphyrin-containing compound metabolism; chlorophyll biosynthesis (light-independent). Catalyzes the formation of the isocyclic ring in chlorophyll biosynthesis. Mediates the cyclase reaction, which results in the formation of divinylprotochlorophyllide (Pchlide) characteristic of all chlorophylls from magnesium-protoporphyrin IX 13-monomethyl ester (MgPMME). This is Magnesium-protoporphyrin IX monomethyl ester [oxidative] cyclase 1 from Synechocystis sp. (strain ATCC 27184 / PCC 6803 / Kazusa).